Reading from the N-terminus, the 301-residue chain is Small ribosomal subunit protein uS2 (301 aa).

Belongs to the universal ribosomal protein uS2 family.

This is Small ribosomal subunit protein uS2 from Acidobacterium capsulatum (strain ATCC 51196 / DSM 11244 / BCRC 80197 / JCM 7670 / NBRC 15755 / NCIMB 13165 / 161).